The sequence spans 406 residues: 2,3-bisphosphoglycerate-independent phosphoglycerate mutase (406 aa).

The protein belongs to the BPG-independent phosphoglycerate mutase family. A-PGAM subfamily.

The enzyme catalyses (2R)-2-phosphoglycerate = (2R)-3-phosphoglycerate. The protein operates within carbohydrate degradation; glycolysis; pyruvate from D-glyceraldehyde 3-phosphate: step 3/5. Functionally, catalyzes the interconversion of 2-phosphoglycerate and 3-phosphoglycerate. In Methanococcus vannielii (strain ATCC 35089 / DSM 1224 / JCM 13029 / OCM 148 / SB), this protein is 2,3-bisphosphoglycerate-independent phosphoglycerate mutase.